The primary structure comprises 814 residues: Kexin (814 aa).

Positions 1-19 (MKVRKYITLCFWWAFSTSA) are cleaved as a signal peptide. Positions 20-109 (LVSSQQIPLK…LFPRNDLFKR (90 aa)) are excised as a propeptide. An N-linked (GlcNAc...) asparagine glycan is attached at N42. The propeptide at 110–113 (LPVP) is removed by dipeptidylpeptidase STE13. Residues 114–678 (APPMDSSLLP…KLSSPRQAMH (565 aa)) lie on the Lumenal side of the membrane. D135 is a binding site for Ca(2+). The Peptidase S8 domain maps to 141–453 (QWHLVNPSFP…FGKIDAHKLI (313 aa)). The N-linked (GlcNAc...) asparagine glycan is linked to N163. D175 (charge relay system) is an active-site residue. D184 contacts Ca(2+). H213 (charge relay system) is an active-site residue. Ca(2+)-binding residues include N227, D277, D320, and E350. Disulfide bonds link C230–C377 and C322–C352. S385 (charge relay system) is an active-site residue. N-linked (GlcNAc...) asparagine glycosylation is found at N404 and N480. The P/Homo B domain maps to 462–596 (VNAQTWFYLP…RLKLFGESID (135 aa)). Residues 651-671 (PQTTTASTDPDSDPNTPKKLS) form a disordered region. Residues 653 to 667 (TTTASTDPDSDPNTP) are compositionally biased toward low complexity. A helical transmembrane segment spans residues 679–699 (YFLTIFLIGATFLVLYFMFFM). Topologically, residues 700–814 (KSRRRIRRSR…PDVPPSSGRS (115 aa)) are cytoplasmic. The disordered stretch occupies residues 756–814 (SLSSSENGDAEHTIDSVLTNENPFSDPIKQKFPNDANAESASNKLQELQPDVPPSSGRS). Over residues 792–801 (NAESASNKLQ) the composition is skewed to polar residues.

This sequence belongs to the peptidase S8 family. Furin subfamily. Ca(2+) serves as cofactor. O-glycosylated.

It is found in the golgi apparatus. The protein resides in the trans-Golgi network membrane. The enzyme catalyses Cleavage of -Lys-Arg-|-Xaa- and -Arg-Arg-|-Xaa- bonds to process yeast alpha-factor pheromone and killer toxin precursors.. Its function is as follows. Processing of precursors of alpha-factors and killer toxin. The sequence is that of Kexin (KEX2) from Saccharomyces cerevisiae (strain ATCC 204508 / S288c) (Baker's yeast).